The sequence spans 192 residues: Holliday junction branch migration complex subunit RuvA (192 aa).

The segment at 1–64 (MLGRLTGLLA…EDAQVLFGFL (64 aa)) is domain I. The domain II stretch occupies residues 65–139 (TAPERETFRM…GKLGADLGPA (75 aa)). Residues 139 to 143 (AIGGK) are flexible linker. The domain III stretch occupies residues 144–192 (PASDAQADILQALIALGYSEREAQAAVKALPAEVGVSDGIKLALKALAR).

Belongs to the RuvA family. As to quaternary structure, homotetramer. Forms an RuvA(8)-RuvB(12)-Holliday junction (HJ) complex. HJ DNA is sandwiched between 2 RuvA tetramers; dsDNA enters through RuvA and exits via RuvB. An RuvB hexamer assembles on each DNA strand where it exits the tetramer. Each RuvB hexamer is contacted by two RuvA subunits (via domain III) on 2 adjacent RuvB subunits; this complex drives branch migration. In the full resolvosome a probable DNA-RuvA(4)-RuvB(12)-RuvC(2) complex forms which resolves the HJ.

It is found in the cytoplasm. The RuvA-RuvB-RuvC complex processes Holliday junction (HJ) DNA during genetic recombination and DNA repair, while the RuvA-RuvB complex plays an important role in the rescue of blocked DNA replication forks via replication fork reversal (RFR). RuvA specifically binds to HJ cruciform DNA, conferring on it an open structure. The RuvB hexamer acts as an ATP-dependent pump, pulling dsDNA into and through the RuvAB complex. HJ branch migration allows RuvC to scan DNA until it finds its consensus sequence, where it cleaves and resolves the cruciform DNA. The chain is Holliday junction branch migration complex subunit RuvA from Methylibium petroleiphilum (strain ATCC BAA-1232 / LMG 22953 / PM1).